The sequence spans 290 residues: 4-hydroxy-tetrahydrodipicolinate synthase (290 aa).

T44 provides a ligand contact to pyruvate. Y132 acts as the Proton donor/acceptor in catalysis. K160 acts as the Schiff-base intermediate with substrate in catalysis. I202 lines the pyruvate pocket.

The protein belongs to the DapA family. Homotetramer; dimer of dimers.

It localises to the cytoplasm. The catalysed reaction is L-aspartate 4-semialdehyde + pyruvate = (2S,4S)-4-hydroxy-2,3,4,5-tetrahydrodipicolinate + H2O + H(+). The protein operates within amino-acid biosynthesis; L-lysine biosynthesis via DAP pathway; (S)-tetrahydrodipicolinate from L-aspartate: step 3/4. Functionally, catalyzes the condensation of (S)-aspartate-beta-semialdehyde [(S)-ASA] and pyruvate to 4-hydroxy-tetrahydrodipicolinate (HTPA). The protein is 4-hydroxy-tetrahydrodipicolinate synthase of Citrifermentans bemidjiense (strain ATCC BAA-1014 / DSM 16622 / JCM 12645 / Bem) (Geobacter bemidjiensis).